The chain runs to 228 residues: MKVTYHGHSVIQVETKTHNIIFDPFLTGNSLTNLKPEEVKADVILLTHGHNDHVGDTEQIAKQNDALVIAPNELAVYLGFKGLKVHPMHIGGARQFDFGKVKLTQAFHGSAVTDEENKTITYTGMPAGILLTIDGKTIFHAGDTALFSDMKLIGELNHIDLAFLPIGDNFTMGPEDAKLAAEWLRAKQVVPVHYNTFPVIEQDPDAFAESLPGGVGKVMAAGETIELA.

The protein belongs to the UPF0173 family.

This is UPF0173 metal-dependent hydrolase RBAM_026340 from Bacillus velezensis (strain DSM 23117 / BGSC 10A6 / LMG 26770 / FZB42) (Bacillus amyloliquefaciens subsp. plantarum).